The sequence spans 255 residues: ParA family protein CT_582 (255 aa).

It belongs to the ParA family.

The chain is ParA family protein CT_582 from Chlamydia trachomatis serovar D (strain ATCC VR-885 / DSM 19411 / UW-3/Cx).